A 324-amino-acid chain; its full sequence is Quinolinate synthase (324 aa).

Positions 39 and 56 each coordinate iminosuccinate. Cys-101 contributes to the [4Fe-4S] cluster binding site. Iminosuccinate-binding positions include Tyr-127–Asn-129 and Ser-144. A [4Fe-4S] cluster-binding site is contributed by Cys-187. Iminosuccinate contacts are provided by residues His-213–Glu-215 and Thr-230. Cys-280 provides a ligand contact to [4Fe-4S] cluster.

Belongs to the quinolinate synthase family. Type 2 subfamily. The cofactor is [4Fe-4S] cluster.

Its subcellular location is the cytoplasm. It carries out the reaction iminosuccinate + dihydroxyacetone phosphate = quinolinate + phosphate + 2 H2O + H(+). It functions in the pathway cofactor biosynthesis; NAD(+) biosynthesis; quinolinate from iminoaspartate: step 1/1. In terms of biological role, catalyzes the condensation of iminoaspartate with dihydroxyacetone phosphate to form quinolinate. The sequence is that of Quinolinate synthase from Trichormus variabilis (strain ATCC 29413 / PCC 7937) (Anabaena variabilis).